The following is a 154-amino-acid chain: Transcriptional repressor NrdR (154 aa).

A zinc finger lies at 3 to 34 (CPFCGHSNTQVLDTRMSEDGDAVRRRRRCEAC). The region spanning 49–139 (PAIVKKNGSR…VYRSFEDVAE (91 aa)) is the ATP-cone domain.

It belongs to the NrdR family. Zn(2+) is required as a cofactor.

In terms of biological role, negatively regulates transcription of bacterial ribonucleotide reductase nrd genes and operons by binding to NrdR-boxes. This is Transcriptional repressor NrdR from Cupriavidus pinatubonensis (strain JMP 134 / LMG 1197) (Cupriavidus necator (strain JMP 134)).